A 290-amino-acid chain; its full sequence is 4-diphosphocytidyl-2-C-methyl-D-erythritol kinase (290 aa).

Residue lysine 13 is part of the active site. An ATP-binding site is contributed by 96 to 106 (PMGGGIGGGSS). Aspartate 138 is an active-site residue.

It belongs to the GHMP kinase family. IspE subfamily.

It catalyses the reaction 4-CDP-2-C-methyl-D-erythritol + ATP = 4-CDP-2-C-methyl-D-erythritol 2-phosphate + ADP + H(+). The protein operates within isoprenoid biosynthesis; isopentenyl diphosphate biosynthesis via DXP pathway; isopentenyl diphosphate from 1-deoxy-D-xylulose 5-phosphate: step 3/6. In terms of biological role, catalyzes the phosphorylation of the position 2 hydroxy group of 4-diphosphocytidyl-2C-methyl-D-erythritol. The sequence is that of 4-diphosphocytidyl-2-C-methyl-D-erythritol kinase from Vibrio campbellii (strain ATCC BAA-1116).